The primary structure comprises 444 residues: UDP-N-acetylmuramate--L-alanine ligase (444 aa).

111–117 contributes to the ATP binding site; that stretch reads GAHGKTS.

It belongs to the MurCDEF family.

Its subcellular location is the cytoplasm. The enzyme catalyses UDP-N-acetyl-alpha-D-muramate + L-alanine + ATP = UDP-N-acetyl-alpha-D-muramoyl-L-alanine + ADP + phosphate + H(+). It participates in cell wall biogenesis; peptidoglycan biosynthesis. In terms of biological role, cell wall formation. The chain is UDP-N-acetylmuramate--L-alanine ligase from Leuconostoc mesenteroides subsp. mesenteroides (strain ATCC 8293 / DSM 20343 / BCRC 11652 / CCM 1803 / JCM 6124 / NCDO 523 / NBRC 100496 / NCIMB 8023 / NCTC 12954 / NRRL B-1118 / 37Y).